The following is a 271-amino-acid chain: MPELPEVETTLRGLAPHLVGQRIHGVILRRPDLRWPIAEQIEQLLPGATITDVRRRAKYLLIDTDAGGSAVLHLGMSGSLRVLPGDTPPRAHDHVDISLQNGRVLRFNDPRRFGCLLWQRDCETHELLASLGPEPLSPAFTGDYLHALARGRRAAVKTFLMDQAVVVGVGNIYAAESLHRAGISPLREAGKVSRERYRRLADAVKEILAYAIQRGGTTLRDFISPDGAPGYFEQELMVYGREGQACKHCGRELKHATIGQRATVWCAACQR.

The active-site Schiff-base intermediate with DNA is the P2. E3 (proton donor) is an active-site residue. K58 acts as the Proton donor; for beta-elimination activity in catalysis. Residues H92, R111, and R152 each coordinate DNA. Residues 237–271 (MVYGREGQACKHCGRELKHATIGQRATVWCAACQR) form an FPG-type zinc finger. R261 functions as the Proton donor; for delta-elimination activity in the catalytic mechanism.

It belongs to the FPG family. In terms of assembly, monomer. Requires Zn(2+) as cofactor.

It catalyses the reaction Hydrolysis of DNA containing ring-opened 7-methylguanine residues, releasing 2,6-diamino-4-hydroxy-5-(N-methyl)formamidopyrimidine.. It carries out the reaction 2'-deoxyribonucleotide-(2'-deoxyribose 5'-phosphate)-2'-deoxyribonucleotide-DNA = a 3'-end 2'-deoxyribonucleotide-(2,3-dehydro-2,3-deoxyribose 5'-phosphate)-DNA + a 5'-end 5'-phospho-2'-deoxyribonucleoside-DNA + H(+). Involved in base excision repair of DNA damaged by oxidation or by mutagenic agents. Acts as a DNA glycosylase that recognizes and removes damaged bases. Has a preference for oxidized purines, such as 7,8-dihydro-8-oxoguanine (8-oxoG). Has AP (apurinic/apyrimidinic) lyase activity and introduces nicks in the DNA strand. Cleaves the DNA backbone by beta-delta elimination to generate a single-strand break at the site of the removed base with both 3'- and 5'-phosphates. The sequence is that of Formamidopyrimidine-DNA glycosylase from Xanthomonas campestris pv. campestris (strain B100).